Consider the following 180-residue polypeptide: Ribulose bisphosphate carboxylase small subunit, chloroplastic 3 (180 aa).

A chloroplast-targeting transit peptide spans 1 to 56; that stretch reads MASSVMSSAAVATRGNGAQASMVAPFTGLKSTASFPVSRKQNLDITSIASNGGRVS.

It belongs to the RuBisCO small chain family. Heterohexadecamer of 8 large and 8 small subunits. In terms of assembly, (Microbial infection) Binds to tobamovirus movement protein; this interaction seems required for viral systemic movement.

Its subcellular location is the plastid. It is found in the chloroplast. It localises to the cell junction. The protein localises to the plasmodesma. Its function is as follows. RuBisCO catalyzes two reactions: the carboxylation of D-ribulose 1,5-bisphosphate, the primary event in carbon dioxide fixation, as well as the oxidative fragmentation of the pentose substrate. Both reactions occur simultaneously and in competition at the same active site. Although the small subunit is not catalytic it is essential for maximal activity. Involved in antiviral defenses. This chain is Ribulose bisphosphate carboxylase small subunit, chloroplastic 3, found in Solanum lycopersicum (Tomato).